A 311-amino-acid chain; its full sequence is Probable cell division protein WhiA (311 aa).

Residues 277–311 (TLKEVADQIPDGPISKSGVNHRFKKLHELAETLKE) constitute a DNA-binding region (H-T-H motif).

The protein belongs to the WhiA family.

Involved in cell division and chromosome segregation. This chain is Probable cell division protein WhiA, found in Lactobacillus helveticus (strain DPC 4571).